Consider the following 468-residue polypeptide: uncharacterized protein (468 aa).

In terms of domain architecture, TRAM spans 3 to 61 (TFANGMTLDVTVDALAPGGKAVCRHEGRVIFVDRGLPGQQLHVRLTTVRKRFAEAECLA). 4 residues coordinate [4Fe-4S] cluster: Cys74, Cys80, Cys83, and Cys162. Gln288, Tyr317, Glu338, and Asp389 together coordinate S-adenosyl-L-methionine. Catalysis depends on Cys416, which acts as the Nucleophile.

Belongs to the class I-like SAM-binding methyltransferase superfamily. RNA M5U methyltransferase family.

This is an uncharacterized protein from Nitratidesulfovibrio vulgaris (strain ATCC 29579 / DSM 644 / CCUG 34227 / NCIMB 8303 / VKM B-1760 / Hildenborough) (Desulfovibrio vulgaris).